Reading from the N-terminus, the 70-residue chain is Large ribosomal subunit protein eL38 (70 aa).

The protein belongs to the eukaryotic ribosomal protein eL38 family.

This chain is Large ribosomal subunit protein eL38 (RpL38), found in Drosophila melanogaster (Fruit fly).